Consider the following 650-residue polypeptide: Acetyl-coenzyme A synthetase (650 aa).

CoA-binding positions include 191–194, Thr311, and Asn335; that span reads RGGR. ATP-binding positions include 387–389, 411–416, Asp500, and Arg515; these read GEP and DTWWQT. Ser523 is a CoA binding site. Arg526 is an ATP binding site. Val537, His539, and Val542 together coordinate Mg(2+). Arg584 lines the CoA pocket. Lys609 carries the post-translational modification N6-acetyllysine.

This sequence belongs to the ATP-dependent AMP-binding enzyme family. It depends on Mg(2+) as a cofactor. In terms of processing, acetylated. Deacetylation by the SIR2-homolog deacetylase activates the enzyme.

It carries out the reaction acetate + ATP + CoA = acetyl-CoA + AMP + diphosphate. Catalyzes the conversion of acetate into acetyl-CoA (AcCoA), an essential intermediate at the junction of anabolic and catabolic pathways. AcsA undergoes a two-step reaction. In the first half reaction, AcsA combines acetate with ATP to form acetyl-adenylate (AcAMP) intermediate. In the second half reaction, it can then transfer the acetyl group from AcAMP to the sulfhydryl group of CoA, forming the product AcCoA. This chain is Acetyl-coenzyme A synthetase, found in Shewanella sp. (strain W3-18-1).